Reading from the N-terminus, the 529-residue chain is BTB/POZ domain-containing protein 6 (529 aa).

The BTB domain occupies 127 to 197 (ADVHFIVGPA…LYSDEIDLEA (71 aa)).

As to quaternary structure, homodimer and heterodimer. Interacts with cul3 via the BTB domain.

Its subcellular location is the cytoplasm. Its function is as follows. Adapter protein for the cul3 E3 ubiquitin-protein ligase complex. Involved in late neuronal development and muscle formation. This chain is BTB/POZ domain-containing protein 6 (btbd6), found in Xenopus tropicalis (Western clawed frog).